The chain runs to 29 residues: Cyclotide psyleio A (29 aa).

A cross-link (cyclopeptide (Gly-Asp)) is located at residues 1–29; the sequence is GLPICGETCFTGTCNTPGCSCTYPICTRD. 3 cysteine pairs are disulfide-bonded: cysteine 5–cysteine 19, cysteine 9–cysteine 21, and cysteine 14–cysteine 26.

This is a cyclic peptide.

Functionally, probably participates in a plant defense mechanism. In Psychotria brachyceras, this protein is Cyclotide psyleio A.